Consider the following 550-residue polypeptide: MFCVQCEQTIRTPAGNGCSYAQGMCGKTAETSDLQDLLVAVLQGLSAWALQARELGIIDSQIDSFAPRAFFSTLTNVNFDSDRIVEYAKDAILLRHSLAVRCRLLDSTITVDHPLAELQLVADDIPSLLQQSQQFALNNDKADVGDDIHGLRMLCLYGLKGAAAYMEHAHVLGQSDEQIYAEYHAYMAWLGTQPRDVDTLLNNAMGIGKMNFNVMAILDQGETQAYGDPQPTSVNVRPVAGKAILISGHDLKDLHMLLEQTQGTGINIYTHGEMLPAHGYPELKRYPHLVGNYGSGWQNQQTEFAKFPGPILMTSNCIIDPNVGNYGDRIWTRSIVGWPGVNHLDGDNFAPVIEQALGMAGFPYSELEHLITVGFGRQTLLNAADTVIDLVASKKLRHVFLVGGCDGSRTERSYFTDFARSVPQDCIIMTLACGKYRFNKLDFGTLEGLPRLLDVGQCNDAYAAIMLAVKLSEKLGCTVNDLPLSLVLSWFEQKAIVILLTLLSLGVKNIYTGPTAPGFLTDNLMAILYEKFGMQPITTVEQDMQAILGH.

[2Fe-2S] cluster contacts are provided by Cys-3, Cys-6, Cys-18, and Cys-25. His-249, Glu-273, Cys-317, Cys-405, Cys-433, Cys-458, Glu-492, and Lys-494 together coordinate hybrid [4Fe-2O-2S] cluster. Cys-405 carries the cysteine persulfide modification.

Belongs to the HCP family. [2Fe-2S] cluster serves as cofactor. It depends on hybrid [4Fe-2O-2S] cluster as a cofactor.

Its subcellular location is the cytoplasm. It carries out the reaction A + NH4(+) + H2O = hydroxylamine + AH2 + H(+). Functionally, catalyzes the reduction of hydroxylamine to form NH(3) and H(2)O. The sequence is that of Hydroxylamine reductase from Yersinia pseudotuberculosis serotype O:1b (strain IP 31758).